The following is a 468-amino-acid chain: 6-phospho-beta-galactosidase (468 aa).

Gln19, His116, Asn159, Glu160, and Asn297 together coordinate D-galactose 6-phosphate. The Proton donor role is filled by Glu160. Glu375 (nucleophile) is an active-site residue. 4 residues coordinate D-galactose 6-phosphate: Ser428, Trp429, Lys435, and Tyr437.

It belongs to the glycosyl hydrolase 1 family.

It carries out the reaction a 6-phospho-beta-D-galactoside + H2O = D-galactose 6-phosphate + an alcohol. The protein operates within carbohydrate metabolism; lactose degradation; D-galactose 6-phosphate and beta-D-glucose from lactose 6-phosphate: step 1/1. The protein is 6-phospho-beta-galactosidase of Streptococcus gordonii (strain Challis / ATCC 35105 / BCRC 15272 / CH1 / DL1 / V288).